A 301-amino-acid chain; its full sequence is MENLLSVKDLSKQQILDLLALAKAVKANPAEYSQALAGKSIVTIYEKQSLRTRVTFDIGIHKLGGHAVYLDAQNGAIGERETVKDFAANISRWADAIVARVMSHKTLEGLVEHGSVPVVNSLCDLYHPCQALADFLTISEHYEDVSKVKLAYIGEGNNVTHSLMLTGAILGAEVTAVCPRGSSPDAQIVKQAMALAEISGGKINVTDNLDDIVDYDVIYGDTWVSMGDDTPLAQVKEKYMPYQINKELLIRTGIKHVLHCQPAHRELEITSEVMDGEHSLIFDQAENRMHAQNAVLLTLLK.

Carbamoyl phosphate-binding positions include R100 and 127 to 130 (HPCQ). L-ornithine is bound by residues N158, D221, and 225–226 (SM). Carbamoyl phosphate is bound by residues C260 and R288.

This sequence belongs to the aspartate/ornithine carbamoyltransferase superfamily. OTCase family. In terms of assembly, homododecamer.

It localises to the cytoplasm. The enzyme catalyses carbamoyl phosphate + L-ornithine = L-citrulline + phosphate + H(+). It participates in amino-acid biosynthesis; L-arginine biosynthesis; L-arginine from L-ornithine and carbamoyl phosphate: step 1/3. Functionally, reversibly catalyzes the transfer of the carbamoyl group from carbamoyl phosphate (CP) to the N(epsilon) atom of ornithine (ORN) to produce L-citrulline. This chain is Ornithine carbamoyltransferase (argF), found in Moritella profunda.